Consider the following 171-residue polypeptide: Putative phosphoesterase BH1439 (171 aa).

H34 (proton donor) is an active-site residue. Short sequence motifs (HXTX) lie at residues 34 to 37 and 115 to 118; these read HVTL and HLTI. Residue H115 is the Proton acceptor of the active site.

The protein belongs to the 2H phosphoesterase superfamily. YjcG family.

The protein is Putative phosphoesterase BH1439 of Halalkalibacterium halodurans (strain ATCC BAA-125 / DSM 18197 / FERM 7344 / JCM 9153 / C-125) (Bacillus halodurans).